A 573-amino-acid chain; its full sequence is PCNA-interacting partner (573 aa).

Disordered stretches follow at residues 470–505 (VGKARIEASSENAHVGRWKGDKLPRKSTQRQISKGK) and 531–560 (PKVPSGSHSKAGGKLAQGTKGNRCPARGKL).

Belongs to the PARI family. As to quaternary structure, interacts with RAD51 and PCNA. Interacts with PARP1. Interacts with TASOR. Expressed in the ovary, Sertoli cells of the testis and in granular cells within the cerebellum.

It localises to the cytoplasm. The protein localises to the nucleus. In terms of biological role, required to suppress inappropriate homologous recombination, thereby playing a central role DNA repair and in the maintenance of genomic stability. Antagonizes homologous recombination by interfering with the formation of the RAD51-DNA homologous recombination structure. Binds single-strand DNA and poly(A) homopolymers. Positively regulate the poly(ADP-ribosyl)ation activity of PARP1; however such function may be indirect. This chain is PCNA-interacting partner (Parpbp), found in Mus musculus (Mouse).